Here is a 416-residue protein sequence, read N- to C-terminus: Iron/alpha-ketoglutarate-dependent dioxygenase asqJ (416 aa).

The interval 1-53 (MGYPKAFTSSDSEPEPDLSRDLGNPVMGNPGVVSRSSSTVAQHSVRNNPTGPD) is disordered. The span at 34 to 50 (SRSSSTVAQHSVRNNPT) shows a compositional bias: polar residues. Positions 242, 244, and 319 each coordinate Fe cation.

This sequence belongs to the PhyH family. In terms of assembly, homodimer. Fe cation serves as cofactor.

The enzyme catalyses (-)-4'-methoxycyclopeptine + 2-oxoglutarate + O2 = (Z)-4'-methoxydehydrocyclopeptine + succinate + CO2 + H2O. It carries out the reaction (Z)-4'-methoxydehydrocyclopeptine + 2-oxoglutarate + O2 = (-)-4'-methoxycyclopenine + succinate + CO2. The catalysed reaction is (-)-cyclopeptine + 2-oxoglutarate + O2 = (Z)-dehydrocyclopeptine + succinate + CO2 + H2O. It catalyses the reaction (Z)-dehydrocyclopeptine + 2-oxoglutarate + O2 = (-)-cyclopenine + succinate + CO2. It participates in secondary metabolite biosynthesis. Its pathway is alkaloid biosynthesis. The protein operates within mycotoxin biosynthesis. Iron/alpha-ketoglutarate-dependent dioxygenase; part of the gene cluster that mediates the biosynthesis of the aspoquinolone mycotoxins. Within the pathway, the iron/alpha-ketoglutarate-dependent dioxygenase asqJ acts as a (-)-cyclopenine synthase that converts 4'-methoxycyclopeptin into 4'-methoxydehydrocyclopeptin through dehydrogenation to form a double bond between C-alpha and C-beta of the O-methyltyrosine side chain. AsqJ is a very unique dioxygenase which is capable of catalyzing radical-mediated dehydrogenation and epoxidation reactions sequentially on a 6,7-benzo-diazepinedione substrate in the 4'-methoxyviridicatin biosynthetic pathway. AsqJ is also capable of converting cyclopeptin into dehydrocyclopeptin. The first step of the pathway is catalyzed by the nonribosomal peptide synthetase asqK that condenses anthranilic acid and O-methyl-L-tyrosine to produce 4'-methoxycyclopeptin. 4'-methoxycyclopeptin is then converted to 4'-methoxydehydrocyclopeptin by the ketoglutarate-dependent dioxygenase asqJ. AsqJ also converts its first product 4'-methoxydehydrocyclopeptin to 4'-methoxycyclopenin. The following conversion of 4'-methoxycyclopenin into 4'-methoxyviridicatin is catalyzed by the cyclopenase asqI. 4'-methoxyviridicatin is the precursor of quinolone natural products, and is further converted to quinolinone B. The prenyltransferase asqH1 then catalyzes the canonical Friedel-Crafts alkylation of quinolinone B with dimethylallyl cation to yield dimethylallyl quinolone, which is subjected to FAD-dependent dehydrogenation by the FAD-linked oxidoreductase asqF to yield conjugated aryl diene. The delta(3') double bond then serves as the site of the second alkylation with DMAPP catalyzed by the prenyltransferase asqH2 to yield a carbenium ion intermediate, which can be attacked by H(2)O to yield a styrenyl quinolone containing a C3'-hydroxyprenyl chain. The FAD-dependent monooxygenase asqG performs epoxidation of the terminal C7'-C8' olefin. Finally, after dehydratation of the epoxide at C3 by asqC, the quinolone epoxide rearrangement protein asqO catalyzes an enzymatic 3-exo-tet cyclization to yield the cyclopropyl-THF ring system in aspoquinolone. The chain is Iron/alpha-ketoglutarate-dependent dioxygenase asqJ from Emericella nidulans (strain FGSC A4 / ATCC 38163 / CBS 112.46 / NRRL 194 / M139) (Aspergillus nidulans).